Here is a 304-residue protein sequence, read N- to C-terminus: Small ribosomal subunit protein uS3 (304 aa).

The region spanning 17–86 (MDEYFAKQLS…NPQIDAQEVK (70 aa)) is the KH type-2 domain.

This sequence belongs to the universal ribosomal protein uS3 family. As to quaternary structure, part of the 30S ribosomal subunit.

Its function is as follows. Binds the lower part of the 30S subunit head. In Methanococcoides burtonii (strain DSM 6242 / NBRC 107633 / OCM 468 / ACE-M), this protein is Small ribosomal subunit protein uS3.